Here is a 341-residue protein sequence, read N- to C-terminus: tRNA dimethylallyltransferase (341 aa).

Position 15–22 (15–22) interacts with ATP; it reads GPTAAGKT. 17–22 contributes to the substrate binding site; the sequence is TAAGKT. Interaction with substrate tRNA stretches follow at residues 44 to 47, 168 to 172, 253 to 258, and 302 to 309; these read DSAL, QRIQR, RCVGYR, and KRQITWLR.

The protein belongs to the IPP transferase family. As to quaternary structure, monomer. It depends on Mg(2+) as a cofactor.

It catalyses the reaction adenosine(37) in tRNA + dimethylallyl diphosphate = N(6)-dimethylallyladenosine(37) in tRNA + diphosphate. Its function is as follows. Catalyzes the transfer of a dimethylallyl group onto the adenine at position 37 in tRNAs that read codons beginning with uridine, leading to the formation of N6-(dimethylallyl)adenosine (i(6)A). The protein is tRNA dimethylallyltransferase of Verminephrobacter eiseniae (strain EF01-2).